The sequence spans 344 residues: Uroporphyrinogen decarboxylase (344 aa).

Residues 24-28 (RQAGR), Phe43, Asp74, Tyr151, Ser206, and His323 contribute to the substrate site.

The protein belongs to the uroporphyrinogen decarboxylase family. In terms of assembly, homodimer.

It is found in the cytoplasm. The enzyme catalyses uroporphyrinogen III + 4 H(+) = coproporphyrinogen III + 4 CO2. The protein operates within porphyrin-containing compound metabolism; protoporphyrin-IX biosynthesis; coproporphyrinogen-III from 5-aminolevulinate: step 4/4. Its function is as follows. Catalyzes the decarboxylation of four acetate groups of uroporphyrinogen-III to yield coproporphyrinogen-III. The polypeptide is Uroporphyrinogen decarboxylase (Rhodobacter capsulatus (Rhodopseudomonas capsulata)).